A 469-amino-acid polypeptide reads, in one-letter code: 3-isopropylmalate dehydratase large subunit (469 aa).

[4Fe-4S] cluster-binding residues include Cys-348, Cys-409, and Cys-412.

Belongs to the aconitase/IPM isomerase family. LeuC type 1 subfamily. In terms of assembly, heterodimer of LeuC and LeuD. Requires [4Fe-4S] cluster as cofactor.

The enzyme catalyses (2R,3S)-3-isopropylmalate = (2S)-2-isopropylmalate. It functions in the pathway amino-acid biosynthesis; L-leucine biosynthesis; L-leucine from 3-methyl-2-oxobutanoate: step 2/4. Catalyzes the isomerization between 2-isopropylmalate and 3-isopropylmalate, via the formation of 2-isopropylmaleate. The polypeptide is 3-isopropylmalate dehydratase large subunit (Nitrosococcus oceani (strain ATCC 19707 / BCRC 17464 / JCM 30415 / NCIMB 11848 / C-107)).